The chain runs to 490 residues: Sporulation-specific protein 1 (490 aa).

The Protein kinase domain occupies 18–272 (YSIQSCIGRG…AYNLLSFEFV (255 aa)). Residues 24–32 (IGRGNFGDV) and lysine 47 each bind ATP. Residue aspartate 141 is the Proton acceptor of the active site.

This sequence belongs to the protein kinase superfamily. STE Ser/Thr protein kinase family. STE20 subfamily.

Its subcellular location is the nucleus. The protein resides in the cytoplasm. The enzyme catalyses L-seryl-[protein] + ATP = O-phospho-L-seryl-[protein] + ADP + H(+). It catalyses the reaction L-threonyl-[protein] + ATP = O-phospho-L-threonyl-[protein] + ADP + H(+). Serine/threonine protein kinase required for spore wall development. The polypeptide is Sporulation-specific protein 1 (SPS1) (Saccharomyces cerevisiae (strain ATCC 204508 / S288c) (Baker's yeast)).